Consider the following 198-residue polypeptide: Alpha1-proteinase inhibitor-degradation deficient protein 37 (198 aa).

At S79 the chain carries Phosphoserine.

The protein localises to the cytoplasm. Its function is as follows. Involved in ER-associated protein degradation (ERAD). In Saccharomyces cerevisiae (strain ATCC 204508 / S288c) (Baker's yeast), this protein is Alpha1-proteinase inhibitor-degradation deficient protein 37 (ADD37).